The chain runs to 636 residues: Signal recognition particle receptor subunit alpha (636 aa).

Disordered stretches follow at residues 132-205 (APTT…ELSK), 217-246 (IQKH…APRV), and 280-314 (IRGT…TKGT). 2 stretches are compositionally biased toward basic and acidic residues: residues 137–146 (KKFEDSEKAK) and 153–165 (IETR…EKAK). The residue at position 177 (Ser177) is a Phosphoserine. Residues 217-238 (IQKHGKGLDKSSKSTKSDTPKE) show a composition bias toward basic and acidic residues. Position 283 is a phosphothreonine (Thr283). Residues Ser295, Ser296, and Ser297 each carry the phosphoserine modification. Polar residues predominate over residues 302–312 (ATQNTKPSATK). Position 303 is a phosphothreonine (Thr303). The segment at 417-634 (YVVTFCGVNG…NAKAVVAALM (218 aa)) is NG domain. Residues 423 to 430 (GVNGVGKS) and 518 to 522 (DTAGR) each bind GTP. Position 576 is a phosphothreonine (Thr576). 586-589 (TKFD) contacts GTP.

This sequence belongs to the GTP-binding SRP family. Heterodimer with SRPRB. Interacts with the signal recognition particle (SRP) complex subunit SRP54.

It localises to the endoplasmic reticulum membrane. In terms of biological role, component of the SRP (signal recognition particle) receptor. Ensures, in conjunction with the signal recognition particle, the correct targeting of the nascent secretory proteins to the endoplasmic reticulum membrane system. Forms a guanosine 5'-triphosphate (GTP)-dependent complex with the SRP subunit SRP54. SRP receptor compaction and GTPase rearrangement drive SRP-mediated cotranslational protein translocation into the ER. The protein is Signal recognition particle receptor subunit alpha of Mus musculus (Mouse).